Here is a 583-residue protein sequence, read N- to C-terminus: Phytoene desaturase (583 aa).

A signal peptide spans 1–20 (MAPPKHVIIIGAGAGGTATA). A helical membrane pass occupies residues 531–551 (IIWFLLIALFAATLVLFIAFP).

Belongs to the carotenoid/retinoid oxidoreductase family. It depends on NAD(+) as a cofactor.

It is found in the membrane. The enzyme catalyses 15-cis-phytoene + 5 A = all-trans-3,4-didehydrolycopene + 5 AH2. Its pathway is carotenoid biosynthesis; lycopene biosynthesis. Its function is as follows. Phytoene desaturase involved in the carotenoid biosynthesis pathway. Converts phytoene into 3,4-didehydrolycopene via the intermediary of phytofluene, zeta-carotene, neurosporene and lycopene, by introducing up to five double bonds into phytoene. This Phycomyces blakesleeanus (strain ATCC 8743b / DSM 1359 / FGSC 10004 / NBRC 33097 / NRRL 1555) protein is Phytoene desaturase (carB).